The following is a 49-amino-acid chain: Large ribosomal subunit protein bL33B (49 aa).

This sequence belongs to the bacterial ribosomal protein bL33 family.

The polypeptide is Large ribosomal subunit protein bL33B (Bacillus cereus (strain ATCC 14579 / DSM 31 / CCUG 7414 / JCM 2152 / NBRC 15305 / NCIMB 9373 / NCTC 2599 / NRRL B-3711)).